We begin with the raw amino-acid sequence, 99 residues long: Ubiquitin-related modifier 1 homolog (99 aa).

The residue at position 99 (Gly99) is a 1-thioglycine. Residue Gly99 forms a Glycyl lysine isopeptide (Gly-Lys) (interchain with K-? in acceptor proteins) linkage.

This sequence belongs to the URM1 family. In terms of assembly, interacts with cer. In terms of processing, C-terminal thiocarboxylation occurs in 2 steps, it is first acyl-adenylated (-COAMP) via the hesA/moeB/thiF part of the MOCS3 homolog, then thiocarboxylated (-COSH) via the rhodanese domain of the MOCS3 homolog.

The protein localises to the cytoplasm. The protein operates within tRNA modification; 5-methoxycarbonylmethyl-2-thiouridine-tRNA biosynthesis. Functionally, acts as a sulfur carrier required for 2-thiolation of mcm(5)S(2)U at tRNA wobble positions of cytosolic tRNA(Lys), tRNA(Glu) and tRNA(Gln). Serves as sulfur donor in tRNA 2-thiolation reaction by being thiocarboxylated (-COSH) at its C-terminus by MOCS3. The sulfur is then transferred to tRNA to form 2-thiolation of mcm(5)S(2)U. Also acts as a ubiquitin-like protein (UBL) that is covalently conjugated via an isopeptide bond to lysine residues of target proteins such as Prx2/Jafrac1, Ciao1, Eip71CD and GILT1. The thiocarboxylated form serves as substrate for conjugation and oxidative stress specifically induces the formation of UBL-protein conjugates. The polypeptide is Ubiquitin-related modifier 1 homolog (Drosophila virilis (Fruit fly)).